The following is a 184-amino-acid chain: NADH-quinone oxidoreductase subunit B (184 aa).

[4Fe-4S] cluster-binding residues include Cys-37, Cys-38, Cys-103, and Cys-132.

Belongs to the complex I 20 kDa subunit family. As to quaternary structure, NDH-1 is composed of 14 different subunits. Subunits NuoB, C, D, E, F, and G constitute the peripheral sector of the complex. The cofactor is [4Fe-4S] cluster.

The protein localises to the cell membrane. The enzyme catalyses a quinone + NADH + 5 H(+)(in) = a quinol + NAD(+) + 4 H(+)(out). Functionally, NDH-1 shuttles electrons from NADH, via FMN and iron-sulfur (Fe-S) centers, to quinones in the respiratory chain. The immediate electron acceptor for the enzyme in this species is believed to be a menaquinone. Couples the redox reaction to proton translocation (for every two electrons transferred, four hydrogen ions are translocated across the cytoplasmic membrane), and thus conserves the redox energy in a proton gradient. The chain is NADH-quinone oxidoreductase subunit B from Rhodococcus erythropolis (strain PR4 / NBRC 100887).